The following is a 348-amino-acid chain: Anthranilate phosphoribosyltransferase (348 aa).

Residues Gly81, 84 to 85 (GD), 91 to 94 (NVST), 109 to 117 (KHGNRAVSG), and Ser121 each bind 5-phospho-alpha-D-ribose 1-diphosphate. Gly81 contacts anthranilate. Ser93 is a Mg(2+) binding site. Asn112 is an anthranilate binding site. Arg167 provides a ligand contact to anthranilate. Mg(2+) contacts are provided by Asp226 and Glu227.

It belongs to the anthranilate phosphoribosyltransferase family. As to quaternary structure, homodimer. The cofactor is Mg(2+).

It catalyses the reaction N-(5-phospho-beta-D-ribosyl)anthranilate + diphosphate = 5-phospho-alpha-D-ribose 1-diphosphate + anthranilate. It functions in the pathway amino-acid biosynthesis; L-tryptophan biosynthesis; L-tryptophan from chorismate: step 2/5. In terms of biological role, catalyzes the transfer of the phosphoribosyl group of 5-phosphorylribose-1-pyrophosphate (PRPP) to anthranilate to yield N-(5'-phosphoribosyl)-anthranilate (PRA). The sequence is that of Anthranilate phosphoribosyltransferase from Azotobacter vinelandii (strain DJ / ATCC BAA-1303).